The following is a 118-amino-acid chain: Large ribosomal subunit protein eL18 (118 aa).

The protein belongs to the eukaryotic ribosomal protein eL18 family.

The polypeptide is Large ribosomal subunit protein eL18 (Sulfurisphaera tokodaii (strain DSM 16993 / JCM 10545 / NBRC 100140 / 7) (Sulfolobus tokodaii)).